Here is a 252-residue protein sequence, read N- to C-terminus: Large ribosomal subunit protein uL4 (252 aa).

It belongs to the universal ribosomal protein uL4 family. Part of the 50S ribosomal subunit.

In terms of biological role, one of the primary rRNA binding proteins, this protein initially binds near the 5'-end of the 23S rRNA. It is important during the early stages of 50S assembly. It makes multiple contacts with different domains of the 23S rRNA in the assembled 50S subunit and ribosome. Functionally, forms part of the polypeptide exit tunnel. This chain is Large ribosomal subunit protein uL4, found in Methanococcus maripaludis (strain C6 / ATCC BAA-1332).